A 265-amino-acid polypeptide reads, in one-letter code: Hemin import ATP-binding protein HmuV (265 aa).

One can recognise an ABC transporter domain in the interval 13-249 (LKASNLHLQL…TAVENVYGWP (237 aa)). Position 45–52 (45–52 (GPNGAGKS)) interacts with ATP.

Belongs to the ABC transporter superfamily. Heme (hemin) importer (TC 3.A.1.14.5) family. As to quaternary structure, the complex is composed of two ATP-binding proteins (HmuV), two transmembrane proteins (HmuU) and a solute-binding protein (HmuT).

The protein resides in the cell inner membrane. In terms of biological role, part of the ABC transporter complex HmuTUV involved in hemin import. Responsible for energy coupling to the transport system. The sequence is that of Hemin import ATP-binding protein HmuV from Photobacterium damselae subsp. damselae (Listonella damsela).